Consider the following 153-residue polypeptide: uncharacterized protein (153 aa).

It to M.jannaschii MJ1183.

This is an uncharacterized protein from Methanothermobacter thermautotrophicus (strain ATCC 29096 / DSM 1053 / JCM 10044 / NBRC 100330 / Delta H) (Methanobacterium thermoautotrophicum).